We begin with the raw amino-acid sequence, 473 residues long: Maltose fermentation regulatory protein MAL13 (473 aa).

Positions 13-39 (CDCCRIRRVKCDGKRPCSSCLQNSLDC) form a DNA-binding region, zn(2)-C6 fungal-type. The short motif at 46–54 (RKRGPKSIR) is the Nuclear localization signal element.

It belongs to the MAL13 family.

The protein resides in the nucleus. Functionally, regulates the coordinate transcription of structural MAL1S (maltase) and AGT1 (maltose permease) genes. This is Maltose fermentation regulatory protein MAL13 (MAL13) from Saccharomyces cerevisiae (strain ATCC 204508 / S288c) (Baker's yeast).